The chain runs to 274 residues: Undecaprenyl-diphosphatase (274 aa).

The next 6 membrane-spanning stretches (helical) occupy residues 44 to 64 (AKVF…LVYW), 85 to 105 (LNVV…GKMI), 109 to 129 (LFIP…ILWA), 185 to 205 (ATDF…AYSL), 214 to 234 (VADI…AWLC), and 247 to 267 (FIPF…TAWT).

Belongs to the UppP family.

It localises to the cell inner membrane. It carries out the reaction di-trans,octa-cis-undecaprenyl diphosphate + H2O = di-trans,octa-cis-undecaprenyl phosphate + phosphate + H(+). In terms of biological role, catalyzes the dephosphorylation of undecaprenyl diphosphate (UPP). Confers resistance to bacitracin. This is Undecaprenyl-diphosphatase from Variovorax paradoxus (strain S110).